A 272-amino-acid chain; its full sequence is HMP-PP phosphatase (272 aa).

Asp-8 acts as the Nucleophile in catalysis. Mg(2+)-binding residues include Asp-8, Asp-10, and Asp-212.

The protein belongs to the HAD-like hydrolase superfamily. Cof family. The cofactor is Mg(2+).

The catalysed reaction is 4-amino-2-methyl-5-(diphosphooxymethyl)pyrimidine + H2O = 4-amino-2-methyl-5-(phosphooxymethyl)pyrimidine + phosphate + H(+). In terms of biological role, catalyzes the hydrolysis of 4-amino-2-methyl-5-hydroxymethylpyrimidine pyrophosphate (HMP-PP) to 4-amino-2-methyl-5-hydroxymethylpyrimidine phosphate (HMP-P). This is HMP-PP phosphatase from Citrobacter koseri (strain ATCC BAA-895 / CDC 4225-83 / SGSC4696).